The primary structure comprises 697 residues: Elongation factor G (697 aa).

Positions glutamate 8–valine 282 constitute a tr-type G domain. Residues alanine 17 to threonine 24, aspartate 81 to histidine 85, and asparagine 135 to aspartate 138 contribute to the GTP site.

This sequence belongs to the TRAFAC class translation factor GTPase superfamily. Classic translation factor GTPase family. EF-G/EF-2 subfamily.

It localises to the cytoplasm. Catalyzes the GTP-dependent ribosomal translocation step during translation elongation. During this step, the ribosome changes from the pre-translocational (PRE) to the post-translocational (POST) state as the newly formed A-site-bound peptidyl-tRNA and P-site-bound deacylated tRNA move to the P and E sites, respectively. Catalyzes the coordinated movement of the two tRNA molecules, the mRNA and conformational changes in the ribosome. This chain is Elongation factor G, found in Acetivibrio thermocellus (strain ATCC 27405 / DSM 1237 / JCM 9322 / NBRC 103400 / NCIMB 10682 / NRRL B-4536 / VPI 7372) (Clostridium thermocellum).